We begin with the raw amino-acid sequence, 165 residues long: Destrin (165 aa).

A2 bears the N-acetylalanine mark. An ADF-H domain is found at 4–153 (GVQVADEVCR…NRACIAEKLG (150 aa)). The Nuclear localization signal signature appears at 30 to 34 (KKRKK).

This sequence belongs to the actin-binding proteins ADF family.

In terms of biological role, actin-depolymerizing protein. Severs actin filaments (F-actin) and binds to actin monomers (G-actin). Acts in a pH-independent manner. In Gallus gallus (Chicken), this protein is Destrin (DSTN).